The following is a 108-amino-acid chain: Nucleoid-associated protein IL1848 (108 aa).

2 disordered regions span residues 1 to 26 and 88 to 108; these read MFKG…AQEE and KERM…KMPF. Residues 9 to 26 show a composition bias toward low complexity; it reads MMKQAQQMQERMQQAQEE.

The protein belongs to the YbaB/EbfC family. As to quaternary structure, homodimer.

It is found in the cytoplasm. The protein localises to the nucleoid. Binds to DNA and alters its conformation. May be involved in regulation of gene expression, nucleoid organization and DNA protection. The protein is Nucleoid-associated protein IL1848 of Idiomarina loihiensis (strain ATCC BAA-735 / DSM 15497 / L2-TR).